The following is a 180-amino-acid chain: MTSRLEKFYKEEVVPALMKQFGYTNPMEVPKLVKVTLNMGVGEAATNKKILENAVGDMTKISGQKPVVTKSRISVASFKIRDGWPIGCKTTLRRHKMYEFLDRLINISLPRVRDFRGVSGRSFDGRGNFNMGVKEQIIFPEIDFDAVDAIRGMDIAITTTAKTDAEAKALLAAFKFPFRN.

This sequence belongs to the universal ribosomal protein uL5 family. In terms of assembly, part of the 50S ribosomal subunit; part of the 5S rRNA/L5/L18/L25 subcomplex. Contacts the 5S rRNA and the P site tRNA. Forms a bridge to the 30S subunit in the 70S ribosome.

Functionally, this is one of the proteins that bind and probably mediate the attachment of the 5S RNA into the large ribosomal subunit, where it forms part of the central protuberance. In the 70S ribosome it contacts protein S13 of the 30S subunit (bridge B1b), connecting the 2 subunits; this bridge is implicated in subunit movement. Contacts the P site tRNA; the 5S rRNA and some of its associated proteins might help stabilize positioning of ribosome-bound tRNAs. The chain is Large ribosomal subunit protein uL5 from Stenotrophomonas maltophilia (strain R551-3).